The primary structure comprises 145 residues: D-aminoacyl-tRNA deacylase (145 aa).

Residues 137 to 138 carry the Gly-cisPro motif, important for rejection of L-amino acids motif; that stretch reads GP.

This sequence belongs to the DTD family. As to quaternary structure, homodimer.

Its subcellular location is the cytoplasm. The enzyme catalyses glycyl-tRNA(Ala) + H2O = tRNA(Ala) + glycine + H(+). It catalyses the reaction a D-aminoacyl-tRNA + H2O = a tRNA + a D-alpha-amino acid + H(+). Functionally, an aminoacyl-tRNA editing enzyme that deacylates mischarged D-aminoacyl-tRNAs. Also deacylates mischarged glycyl-tRNA(Ala), protecting cells against glycine mischarging by AlaRS. Acts via tRNA-based rather than protein-based catalysis; rejects L-amino acids rather than detecting D-amino acids in the active site. By recycling D-aminoacyl-tRNA to D-amino acids and free tRNA molecules, this enzyme counteracts the toxicity associated with the formation of D-aminoacyl-tRNA entities in vivo and helps enforce protein L-homochirality. This Pseudomonas putida (strain W619) protein is D-aminoacyl-tRNA deacylase.